Here is a 580-residue protein sequence, read N- to C-terminus: Phosphomethylpyrimidine synthase (580 aa).

Residues 1–58 are disordered; that stretch reads MTPTQNEIHPKHSYSPIRKHGLEVPETEIALDDSPSGPNEPFRIYRTRGPETDPTLGL. Substrate-binding positions include Asn180, Met209, Tyr238, His274, 294–296, 335–338, and Glu374; these read SRG and DGLR. Position 378 (His378) interacts with Zn(2+). Tyr401 contributes to the substrate binding site. His442 lines the Zn(2+) pocket. 3 residues coordinate [4Fe-4S] cluster: Cys522, Cys525, and Cys530. The disordered stretch occupies residues 554 to 580; it reads VGASDSTEGMKEKSREFVAGGGEVYRE.

It belongs to the ThiC family. It depends on [4Fe-4S] cluster as a cofactor.

It catalyses the reaction 5-amino-1-(5-phospho-beta-D-ribosyl)imidazole + S-adenosyl-L-methionine = 4-amino-2-methyl-5-(phosphooxymethyl)pyrimidine + CO + 5'-deoxyadenosine + formate + L-methionine + 3 H(+). Its pathway is cofactor biosynthesis; thiamine diphosphate biosynthesis. Catalyzes the synthesis of the hydroxymethylpyrimidine phosphate (HMP-P) moiety of thiamine from aminoimidazole ribotide (AIR) in a radical S-adenosyl-L-methionine (SAM)-dependent reaction. The polypeptide is Phosphomethylpyrimidine synthase (Corynebacterium efficiens (strain DSM 44549 / YS-314 / AJ 12310 / JCM 11189 / NBRC 100395)).